The chain runs to 356 residues: Tyrosine recombinase XerS (356 aa).

The Core-binding (CB) domain maps to 16–121 (VMPPYVLEYY…ALSSLYKYLT (106 aa)). One can recognise a Tyr recombinase domain in the interval 169–354 (GFLDYIDSEY…INEEQKNALD (186 aa)). Residues arginine 210, lysine 234, histidine 306, arginine 309, and histidine 332 contribute to the active site. Tyrosine 341 acts as the O-(3'-phospho-DNA)-tyrosine intermediate in catalysis.

The protein belongs to the 'phage' integrase family. XerS subfamily.

The protein resides in the cytoplasm. Its activity is regulated as follows. FtsK is required for recombination. In terms of biological role, site-specific tyrosine recombinase, which acts by catalyzing the cutting and rejoining of the recombining DNA molecules. Essential to convert dimers of the bacterial chromosome into monomers to permit their segregation at cell division. Binds an atypical recombination dif site (difSL). Binds preferentially to the left arm and cooperatively to the right arm of difSL. The protein is Tyrosine recombinase XerS of Lactococcus lactis subsp. cremoris (strain MG1363).